We begin with the raw amino-acid sequence, 837 residues long: Outer membrane usher protein PsaC (837 aa).

The signal sequence occupies residues Met1–Ala23.

Belongs to the fimbrial export usher family.

The protein resides in the cell outer membrane. Involved in the export and assembly of PsaA (pH 6) fimbrial subunits across the outer membrane. The protein is Outer membrane usher protein PsaC (psaC) of Yersinia pestis.